Consider the following 301-residue polypeptide: Probable alpha-L-glutamate ligase (301 aa).

One can recognise an ATP-grasp domain in the interval 104 to 287 (LQLLSRRGIG…VAGMIIEHLE (184 aa)). ATP-binding positions include Lys141, 178-179 (EY), Asp187, and 211-213 (RSN). The Mg(2+) site is built by Asp248, Glu260, and Asn262. 3 residues coordinate Mn(2+): Asp248, Glu260, and Asn262.

This sequence belongs to the RimK family. Mg(2+) serves as cofactor. It depends on Mn(2+) as a cofactor.

This Pseudomonas putida (strain W619) protein is Probable alpha-L-glutamate ligase.